We begin with the raw amino-acid sequence, 35 residues long: Cytochrome b6-f complex subunit 5 (35 aa).

A helical membrane pass occupies residues 5 to 25 (LLCGIVLGLIPVTLTGLFVAA).

The protein belongs to the PetG family. In terms of assembly, the 4 large subunits of the cytochrome b6-f complex are cytochrome b6, subunit IV (17 kDa polypeptide, PetD), cytochrome f and the Rieske protein, while the 4 small subunits are PetG, PetL, PetM and PetN. The complex functions as a dimer.

It localises to the plastid. It is found in the organellar chromatophore thylakoid membrane. Functionally, component of the cytochrome b6-f complex, which mediates electron transfer between photosystem II (PSII) and photosystem I (PSI), cyclic electron flow around PSI, and state transitions. PetG is required for either the stability or assembly of the cytochrome b6-f complex. This chain is Cytochrome b6-f complex subunit 5, found in Paulinella chromatophora.